We begin with the raw amino-acid sequence, 736 residues long: DNA topoisomerase 1 (736 aa).

In terms of domain architecture, Toprim spans 2-113 (KHLIIVESPA…SYPRIVFHEI (112 aa)). Residues glutamate 8 and aspartate 82 each contribute to the Mg(2+) site. The region spanning 129–552 (DMFKVNAQQA…DFYYPFMDKI (424 aa)) is the Topo IA-type catalytic domain. Residues 163-168 (SAGRVQ) form an interaction with DNA region. Tyrosine 297 serves as the catalytic O-(5'-phospho-DNA)-tyrosine intermediate. 4 consecutive C4-type zinc fingers follow at residues 572-598 (CPKCGGELVKKNSRYGEFIACNNYPKC), 616-642 (CEKCGGEMVQKFSRNGAFLACNNYPEC), 663-689 (CPECGGDIALKRSKKGSFYGCNNYPKC), and 702-725 (CEKCHYLMSERIYRKKKAHECIQC).

Belongs to the type IA topoisomerase family. Monomer. The cofactor is Mg(2+).

It catalyses the reaction ATP-independent breakage of single-stranded DNA, followed by passage and rejoining.. Functionally, releases the supercoiling and torsional tension of DNA, which is introduced during the DNA replication and transcription, by transiently cleaving and rejoining one strand of the DNA duplex. Introduces a single-strand break via transesterification at a target site in duplex DNA. The scissile phosphodiester is attacked by the catalytic tyrosine of the enzyme, resulting in the formation of a DNA-(5'-phosphotyrosyl)-enzyme intermediate and the expulsion of a 3'-OH DNA strand. The free DNA strand then undergoes passage around the unbroken strand, thus removing DNA supercoils. Finally, in the religation step, the DNA 3'-OH attacks the covalent intermediate to expel the active-site tyrosine and restore the DNA phosphodiester backbone. The chain is DNA topoisomerase 1 from Helicobacter pylori (strain J99 / ATCC 700824) (Campylobacter pylori J99).